The chain runs to 908 residues: MPSSGPGDTSSSSLEREDDRKEGEEQEENRGKEERQEPSATARKVGRPGRKRKHPPVESSDTPKDPAVTTKSQPMAQDSGPSDLLPNGDLEKRSEPQPEEGSPAAGQKGGAPAEGEGTETPPEASRAVENGCCVTKEGRGASAGEGKEQKQTNIESMKMEGSRGRLRGGLGWESSLRQRPMPRLTFQAGDPYYISKRKRDEWLARWKREAEKKAKVIAVMNAVEENQASGESQKVEEASPPAVQQPTDPASPTVATTPEPVGGDAGDKNATKAADDEPEYEDGRGFGIGELVWGKLRGFSWWPGRIVSWWMTGRSRAAEGTRWVMWFGDGKFSVVCVEKLMPLSSFCSAFHQATYNKQPMYRKAIYEVLQVASSRAGKLFPACHDSDESDSGKAVEVQNKQMIEWALGGFQPSGPKGLEPPEEEKNPYKEVYTDMWVEPEAAAYAPPPPAKKPRKSTTEKPKVKEIIDERTRERLVYEVRQKCRNIEDICISCGSLNVTLEHPLFIGGMCQNCKNCFLECAYQYDDDGYQSYCTICCGGREVLMCGNNNCCRCFCVECVDLLVGPGAAQAAIKEDPWNCYMCGHKGTYGLLRRREDWPSRLQMFFANNHDQEFDPPKVYPPVPAEKRKPIRVLSLFDGIATGLLVLKDLGIQVDRYIASEVCEDSITVGMVRHQGKIMYVGDVRSVTQKHIQEWGPFDLVIGGSPCNDLSIVNPARKGLYEGTGRLFFEFYRLLHDARPKEGDDRPFFWLFENVVAMGVSDKRDISRFLESNPVMIDAKEVSAAHRARYFWGNLPGMNRPLASTVNDKLELQECLEHGRIAKFSKVRTITTRSNSIKQGKDQHFPVFMNEKEDILWCTEMERVFGFPVHYTDVSNMSRLARQRLLGRSWSVPVIRHLFAPLKEYFACV.

Over residues 1-13 (MPSSGPGDTSSSS) the composition is skewed to low complexity. Disordered regions lie at residues 1–183 (MPSS…PMPR) and 226–281 (NQAS…PEYE). The span at 14–37 (LEREDDRKEGEEQEENRGKEERQE) shows a compositional bias: basic and acidic residues. The segment covering 44-54 (KVGRPGRKRKH) has biased composition (basic residues). Residues 69-80 (TTKSQPMAQDSG) show a composition bias toward polar residues. At Ser-102 the chain carries Phosphoserine. Residues 110 to 124 (GAPAEGEGTETPPEA) show a composition bias toward low complexity. Thr-120 bears the Phosphothreonine mark. Residue Lys-158 forms a Glycyl lysine isopeptide (Lys-Gly) (interchain with G-Cter in SUMO2) linkage. Arg-167 is modified (omega-N-methylarginine). The tract at residues 195–399 (SKRKRDEWLA…DSGKAVEVQN (205 aa)) is interaction with DNMT1 and DNMT3B. A phosphoserine mark is found at Ser-239 and Ser-251. The span at 242 to 256 (AVQQPTDPASPTVAT) shows a compositional bias: polar residues. Position 257 is a phosphothreonine (Thr-257). The span at 265–275 (AGDKNATKAAD) shows a compositional bias: basic and acidic residues. The 59-residue stretch at 288–346 (IGELVWGKLRGFSWWPGRIVSWWMTGRSRAAEGTRWVMWFGDGKFSVVCVEKLMPLSSF) folds into the PWWP domain. Ser-386 and Ser-389 each carry phosphoserine. A disordered region spans residues 443–462 (AYAPPPPAKKPRKSTTEKPK). The region spanning 478-610 (EVRQKCRNIE…LQMFFANNHD (133 aa)) is the ADD domain. The GATA-type; atypical zinc finger occupies 489–519 (ICISCGSLNVTLEHPLFIGGMCQNCKNCFLE). Residues 490 to 582 (CISCGSLNVT…KEDPWNCYMC (93 aa)) form an interaction with the PRC2/EED-EZH2 complex region. The PHD-type; atypical zinc finger occupies 530 to 586 (QSYCTICCGGREVLMCGNNNCCRCFCVECVDLLVGPGAAQAAIKEDPWNCYMCGHKG). One can recognise an SAM-dependent MTase C5-type domain in the interval 630-908 (IRVLSLFDGI…APLKEYFACV (279 aa)). S-adenosyl-L-methionine is bound by residues 637–641 (DGIAT), Glu-660, and 682–684 (DVR). Cys-706 is a catalytic residue. Residue Cys-706 is modified to S-methylcysteine; by autocatalysis. Residue 887–889 (RSW) participates in S-adenosyl-L-methionine binding.

Belongs to the class I-like SAM-binding methyltransferase superfamily. C5-methyltransferase family. Heterotetramer composed of 1 DNMT3A homodimer and 2 DNMT3L subunits (DNMT3L-DNMT3A-DNMT3A-DNMT3L). Interacts with DNMT1 and DNMT3B. Interacts with MPHOSPH8. Interacts with histone H3 that is not methylated at 'Lys-4' (H3K4). Binds the ZBTB18 transcriptional repressor. Interacts with SETDB1. Associates with HDAC1 through its ADD domain. Interacts with UHRF1. Interacts with the PRC2/EED-EZH2 complex. Interacts with UBC9, PIAS1 and PIAS2. Interacts with SPOCD1. Interacts with ZNF263; recruited to the SIX3 promoter along with other proteins involved in chromatin modification and transcriptional corepression where it contributes to transcriptional repression. Post-translationally, auto-methylated at Cys-706: auto-methylation takes place in absence of DNA substrate and inactivates the DNA methyltransferase activity. Inactivation by auto-methylation may be used to inactivate unused DNA methyltransferases in the cell. Sumoylated; sumoylation disrupts the ability to interact with histone deacetylases (HDAC1 and HDAC2) and repress transcription. As to expression, isoform 1 is expressed ubiquitously at low levels. Expression of isoform 2 is restricted to tissues containing cells which are undergoing active de novo methylation, including spleen, testis and thymus.

It localises to the nucleus. Its subcellular location is the chromosome. The protein resides in the cytoplasm. It carries out the reaction a 2'-deoxycytidine in DNA + S-adenosyl-L-methionine = a 5-methyl-2'-deoxycytidine in DNA + S-adenosyl-L-homocysteine + H(+). The enzyme catalyses L-cysteinyl-[protein] + S-adenosyl-L-methionine = S-methyl-L-cysteinyl-[protein] + S-adenosyl-L-homocysteine + H(+). Activated by binding to the regulatory factor DNMT3L. Auto-methylation at Cys-706 in absence of DNA inactivates the DNA methyltransferase activity. Its function is as follows. Required for genome-wide de novo methylation and is essential for the establishment of DNA methylation patterns during development. DNA methylation is coordinated with methylation of histones. It modifies DNA in a non-processive manner and also methylates non-CpG sites. May preferentially methylate DNA linker between 2 nucleosomal cores and is inhibited by histone H1. Plays a role in paternal and maternal imprinting. Required for methylation of most imprinted loci in germ cells. Acts as a transcriptional corepressor for ZBTB18. Recruited to trimethylated 'Lys-36' of histone H3 (H3K36me3) sites. Can actively repress transcription through the recruitment of HDAC activity. Also has weak auto-methylation activity on Cys-706 in absence of DNA. This Mus musculus (Mouse) protein is DNA (cytosine-5)-methyltransferase 3A.